Reading from the N-terminus, the 204-residue chain is Proteasome subunit beta type-3-B (204 aa).

The protein belongs to the peptidase T1B family. As to quaternary structure, component of the 20S core complex of the 26S proteasome. The 26S proteasome is composed of a core protease (CP), known as the 20S proteasome, capped at one or both ends by the 19S regulatory particle (RP/PA700). The 20S proteasome core is composed of 28 subunits that are arranged in four stacked rings, resulting in a barrel-shaped structure. The two end rings are each formed by seven alpha subunits, and the two central rings are each formed by seven beta subunits. The catalytic chamber with the active sites is on the inside of the barrel.

It localises to the cytoplasm. The protein localises to the nucleus. In terms of biological role, non-catalytic component of the proteasome, a multicatalytic proteinase complex which is characterized by its ability to cleave peptides with Arg, Phe, Tyr, Leu, and Glu adjacent to the leaving group at neutral or slightly basic pH. The proteasome has an ATP-dependent proteolytic activity. In Arabidopsis thaliana (Mouse-ear cress), this protein is Proteasome subunit beta type-3-B (PBC2).